The sequence spans 321 residues: Aspartate carbamoyltransferase catalytic subunit (321 aa).

Carbamoyl phosphate-binding residues include arginine 65 and threonine 66. Lysine 93 serves as a coordination point for L-aspartate. 3 residues coordinate carbamoyl phosphate: arginine 115, histidine 143, and glutamine 146. 2 residues coordinate L-aspartate: arginine 176 and arginine 230. Carbamoyl phosphate-binding residues include glycine 271 and proline 272.

The protein belongs to the aspartate/ornithine carbamoyltransferase superfamily. ATCase family. As to quaternary structure, heterododecamer (2C3:3R2) of six catalytic PyrB chains organized as two trimers (C3), and six regulatory PyrI chains organized as three dimers (R2).

It catalyses the reaction carbamoyl phosphate + L-aspartate = N-carbamoyl-L-aspartate + phosphate + H(+). It functions in the pathway pyrimidine metabolism; UMP biosynthesis via de novo pathway; (S)-dihydroorotate from bicarbonate: step 2/3. In terms of biological role, catalyzes the condensation of carbamoyl phosphate and aspartate to form carbamoyl aspartate and inorganic phosphate, the committed step in the de novo pyrimidine nucleotide biosynthesis pathway. This chain is Aspartate carbamoyltransferase catalytic subunit, found in Bartonella henselae (strain ATCC 49882 / DSM 28221 / CCUG 30454 / Houston 1) (Rochalimaea henselae).